A 1043-amino-acid polypeptide reads, in one-letter code: tRNA wybutosine-synthesizing protein 2/3/4 (1043 aa).

A tRNA wybutosine-synthesizing protein 3 homolog region spans residues 1-233; that stretch reads MEFDRRKAAA…PVLQNGAKHG (233 aa). The interval 53-75 is disordered; it reads RVSVLAQPPPPQQADPGGAKTKK. 4 Kelch repeats span residues 360-410, 412-460, 461-510, and 512-559; these read DIYV…AVDR, VYVF…SYGS, KLFL…IYKD, and LGIL…VIID. Residues 700–1041 form a tRNA wybutosine-synthesizing protein 2 homolog region; the sequence is QPDDSCVFEE…RHLVVDVKCR (342 aa). S-adenosyl-L-methionine-binding positions include K874 and 942-943; that span reads DN.

In the C-terminal section; belongs to the class I-like SAM-binding methyltransferase superfamily. TRM5/TYW2 family. This sequence in the N-terminal section; belongs to the TYW3 family.

The catalysed reaction is 4-demethyl-7-[(3S)-3-amino-3-carboxypropyl]wyosine(37) in tRNA(Phe) + S-adenosyl-L-methionine = 7-[(3S)-3-amino-3-carboxypropyl]wyosine(37) in tRNA(Phe) + S-adenosyl-L-homocysteine + H(+). It catalyses the reaction 4-demethylwyosine(37) in tRNA(Phe) + S-adenosyl-L-methionine = 4-demethyl-7-[(3S)-3-amino-3-carboxypropyl]wyosine(37) in tRNA(Phe) + S-methyl-5'-thioadenosine + H(+). It participates in tRNA modification; wybutosine-tRNA(Phe) biosynthesis. S-adenosyl-L-methionine-dependent transferase that acts as a component of the wybutosine biosynthesis pathway. Wybutosine is a hyper modified guanosine with a tricyclic base found at the 3'-position adjacent to the anticodon of eukaryotic phenylalanine tRNA. In Oryza sativa subsp. japonica (Rice), this protein is tRNA wybutosine-synthesizing protein 2/3/4.